The primary structure comprises 403 residues: Subtilisin-like protease CPC735_035780 (403 aa).

Positions 1 to 19 are cleaved as a signal peptide; that stretch reads MSIMKIATLFFAALSAVEA. Positions 20-117 are excised as a propeptide; that stretch reads AKLLTPSDKR…VEPDRRVHLT (98 aa). The region spanning 35–116 is the Inhibitor I9 domain; that stretch reads SYIVVMKDNV…YVEPDRRVHL (82 aa). Residues 127–403 form the Peptidase S8 domain; the sequence is SWGLGRISHR…NKLLYNNSGR (277 aa). Catalysis depends on charge relay system residues aspartate 159 and histidine 190. Asparagine 233 and asparagine 251 each carry an N-linked (GlcNAc...) asparagine glycan. Serine 349 serves as the catalytic Charge relay system. Asparagine 399 carries N-linked (GlcNAc...) asparagine glycosylation.

Belongs to the peptidase S8 family.

The protein resides in the secreted. Secreted subtilisin-like serine protease with keratinolytic activity that contributes to pathogenicity. The sequence is that of Subtilisin-like protease CPC735_035780 from Coccidioides posadasii (strain C735) (Valley fever fungus).